The following is a 78-amino-acid chain: Large ribosomal subunit protein bL28 (78 aa).

The segment at 1–20 is disordered; it reads MSRVCQVTGKGPVTGNNISH.

The protein belongs to the bacterial ribosomal protein bL28 family.

The polypeptide is Large ribosomal subunit protein bL28 (Pseudomonas fluorescens (strain ATCC BAA-477 / NRRL B-23932 / Pf-5)).